The primary structure comprises 354 residues: Probable L-ascorbate-6-phosphate lactonase UlaG (354 aa).

The protein belongs to the UlaG family. A divalent metal cation serves as cofactor.

The protein localises to the cytoplasm. It catalyses the reaction L-ascorbate 6-phosphate + H2O = 3-dehydro-L-gulonate 6-phosphate. The protein operates within cofactor degradation; L-ascorbate degradation; D-xylulose 5-phosphate from L-ascorbate: step 1/4. In terms of biological role, probably catalyzes the hydrolysis of L-ascorbate-6-P into 3-keto-L-gulonate-6-P. Is essential for L-ascorbate utilization under anaerobic conditions. The chain is Probable L-ascorbate-6-phosphate lactonase UlaG from Escherichia coli O45:K1 (strain S88 / ExPEC).